The following is a 417-amino-acid chain: NADH-quinone oxidoreductase subunit D (417 aa).

It belongs to the complex I 49 kDa subunit family. As to quaternary structure, NDH-1 is composed of 14 different subunits. Subunits NuoB, C, D, E, F, and G constitute the peripheral sector of the complex.

Its subcellular location is the cell inner membrane. The enzyme catalyses a quinone + NADH + 5 H(+)(in) = a quinol + NAD(+) + 4 H(+)(out). NDH-1 shuttles electrons from NADH, via FMN and iron-sulfur (Fe-S) centers, to quinones in the respiratory chain. The immediate electron acceptor for the enzyme in this species is believed to be ubiquinone. Couples the redox reaction to proton translocation (for every two electrons transferred, four hydrogen ions are translocated across the cytoplasmic membrane), and thus conserves the redox energy in a proton gradient. In Nitrosomonas eutropha (strain DSM 101675 / C91 / Nm57), this protein is NADH-quinone oxidoreductase subunit D.